The sequence spans 73 residues: Cell division protein ZapB (73 aa).

Positions 3–67 (LELLSKLETK…WNDKVTGLVG (65 aa)) form a coiled coil.

Belongs to the ZapB family. In terms of assembly, homodimer. The ends of the coiled-coil dimer bind to each other, forming polymers. Interacts with FtsZ.

It is found in the cytoplasm. Its function is as follows. Non-essential, abundant cell division factor that is required for proper Z-ring formation. It is recruited early to the divisome by direct interaction with FtsZ, stimulating Z-ring assembly and thereby promoting cell division earlier in the cell cycle. Its recruitment to the Z-ring requires functional FtsA or ZipA. This chain is Cell division protein ZapB, found in Shewanella sp. (strain MR-4).